We begin with the raw amino-acid sequence, 119 residues long: uncharacterized protein (119 aa).

This is an uncharacterized protein from Shigella flexneri.